A 260-amino-acid chain; its full sequence is 2-amino-3,7-dideoxy-D-threo-hept-6-ulosonate synthase 1 (260 aa).

Residue Asp-26 is the Proton acceptor of the active site. 1-deoxy-D-threo-hexo-2,5-diulose 6-phosphate-binding positions include 26–30 (DHGIT) and 144–146 (YPR). Residue Tyr-144 is the Proton donor of the active site. Lys-172 acts as the Schiff-base intermediate with substrate in catalysis. Residues 194–195 (GG) and 221–222 (GR) each bind 1-deoxy-D-threo-hexo-2,5-diulose 6-phosphate.

This sequence belongs to the DeoC/FbaB aldolase family. ADHS subfamily. In terms of assembly, homodecamer.

The catalysed reaction is 1-deoxy-D-threo-hexo-2,5-diulose 6-phosphate + L-aspartate 4-semialdehyde = 2,3-dioxopropyl phosphate + 2-amino-2,3,7-trideoxy-D-lyxo-hept-6-ulosonate. Its function is as follows. Catalyzes a transaldol reaction between 6-deoxy-5-ketofructose 1-phosphate (DKFP) and L-aspartate semialdehyde (ASA) with an elimination of hydroxypyruvaldehyde phosphate to yield 2-amino-3,7-dideoxy-D-threo-hept-6-ulosonate (ADH). Plays a key role in an alternative pathway of the biosynthesis of 3-dehydroquinate (DHQ), which is involved in the canonical pathway for the biosynthesis of aromatic amino acids. In Archaeoglobus fulgidus (strain ATCC 49558 / DSM 4304 / JCM 9628 / NBRC 100126 / VC-16), this protein is 2-amino-3,7-dideoxy-D-threo-hept-6-ulosonate synthase 1.